The sequence spans 370 residues: Actin-related protein 2/3 complex subunit 1A-B (370 aa).

WD repeat units lie at residues 6–45 (FLLEPITCHAWNKDLTQIAISPNNHEVHIYKNSGNQWVKC), 50–89 (EHNGHITGIDWAPKSDRIVTCGADRNAYVWSQKDGVWKPT), 140–179 (PIRSTVLSLDWHPNNVLLAAGSCDFKTRVFSAYIKEVDEK), 202–241 (SSGGWVHSVSFSASGNKLAWVSHDSTVSVADASKNMSVSQ), 244–284 (TEFL…TFVS), and 322–365 (LHQN…SYIQ).

It belongs to the WD repeat ARPC1 family. In terms of assembly, component of the Arp2/3 complex.

It is found in the cytoplasm. Its subcellular location is the cytoskeleton. The protein resides in the nucleus. Its function is as follows. Probably functions as a component of the Arp2/3 complex which is involved in regulation of actin polymerization and together with an activating nucleation-promoting factor (NPF) mediates the formation of branched actin networks. In addition to its role in the cytoplasmic cytoskeleton, the Arp2/3 complex also promotes actin polymerization in the nucleus, thereby regulating gene transcription and repair of damaged DNA. This is Actin-related protein 2/3 complex subunit 1A-B (arpc1a-b) from Xenopus laevis (African clawed frog).